A 210-amino-acid chain; its full sequence is Large ribosomal subunit protein uL3 (210 aa).

Residues threonine 134 to proline 153 form a disordered region. An N5-methylglutamine modification is found at glutamine 151.

It belongs to the universal ribosomal protein uL3 family. As to quaternary structure, part of the 50S ribosomal subunit. Forms a cluster with proteins L14 and L19. Methylated by PrmB.

Its function is as follows. One of the primary rRNA binding proteins, it binds directly near the 3'-end of the 23S rRNA, where it nucleates assembly of the 50S subunit. This Aeromonas salmonicida (strain A449) protein is Large ribosomal subunit protein uL3.